The primary structure comprises 191 residues: Small ribosomal subunit protein uS7 (191 aa).

The tract at residues 56 to 80 is disordered; the sequence is NKSGEQGDGDGESGGKAGGIKKRSL.

This sequence belongs to the universal ribosomal protein uS7 family. Part of the 30S ribosomal subunit. Contacts proteins S9 and S11.

Functionally, one of the primary rRNA binding proteins, it binds directly to 16S rRNA where it nucleates assembly of the head domain of the 30S subunit. Is located at the subunit interface close to the decoding center, probably blocks exit of the E-site tRNA. The polypeptide is Small ribosomal subunit protein uS7 (Coxiella burnetii (strain CbuK_Q154) (Coxiella burnetii (strain Q154))).